The following is a 299-amino-acid chain: Probable lipid kinase YegS (299 aa).

A DAGKc domain is found at 2 to 133 (ANFPASLLIL…IDMARVNDKT (132 aa)). Residues Thr-40, 66–72 (GDGTINE), and Thr-95 each bind ATP. 3 residues coordinate Mg(2+): Leu-215, Asp-218, and Leu-220. Glu-271 acts as the Proton acceptor in catalysis.

It belongs to the diacylglycerol/lipid kinase family. YegS lipid kinase subfamily. Mg(2+) is required as a cofactor. Requires Ca(2+) as cofactor.

Its subcellular location is the cytoplasm. Its function is as follows. Probably phosphorylates lipids; the in vivo substrate is unknown. In Salmonella newport (strain SL254), this protein is Probable lipid kinase YegS.